A 132-amino-acid polypeptide reads, in one-letter code: Small ribosomal subunit protein uS13 (132 aa).

The segment covering 101-125 has biased composition (basic residues); the sequence is RGLPVRGQRTKTNARTRKGPRKTVA. A disordered region spans residues 101–132; that stretch reads RGLPVRGQRTKTNARTRKGPRKTVANKKIETR.

The protein belongs to the universal ribosomal protein uS13 family. In terms of assembly, part of the 30S ribosomal subunit. Forms a loose heterodimer with protein S19. Forms two bridges to the 50S subunit in the 70S ribosome.

Its function is as follows. Located at the top of the head of the 30S subunit, it contacts several helices of the 16S rRNA. In the 70S ribosome it contacts the 23S rRNA (bridge B1a) and protein L5 of the 50S subunit (bridge B1b), connecting the 2 subunits; these bridges are implicated in subunit movement. Contacts the tRNAs in the A and P-sites. The protein is Small ribosomal subunit protein uS13 of Ureaplasma urealyticum serovar 10 (strain ATCC 33699 / Western).